Consider the following 212-residue polypeptide: Cytochrome c biogenesis ATP-binding export protein CcmA (212 aa).

The ABC transporter domain maps to 8–212; the sequence is LQATALACER…RSIDLAKGSA (205 aa). Residue 40–47 participates in ATP binding; the sequence is GPNGSGKT.

Belongs to the ABC transporter superfamily. CcmA exporter (TC 3.A.1.107) family. As to quaternary structure, the complex is composed of two ATP-binding proteins (CcmA) and two transmembrane proteins (CcmB).

The protein resides in the cell inner membrane. The enzyme catalyses heme b(in) + ATP + H2O = heme b(out) + ADP + phosphate + H(+). Its function is as follows. Part of the ABC transporter complex CcmAB involved in the biogenesis of c-type cytochromes; once thought to export heme, this seems not to be the case, but its exact role is uncertain. Responsible for energy coupling to the transport system. The polypeptide is Cytochrome c biogenesis ATP-binding export protein CcmA (Pseudomonas syringae pv. tomato (strain ATCC BAA-871 / DC3000)).